The following is a 464-amino-acid chain: Ribosomal protein uS12 methylthiotransferase RimO (464 aa).

In terms of domain architecture, MTTase N-terminal spans 14–125; the sequence is PTVAFAHLGC…IVEVLQRVEA (112 aa). The [4Fe-4S] cluster site is built by Cys23, Cys59, Cys88, Cys163, Cys167, and Cys170. In terms of domain architecture, Radical SAM core spans 149–378; the sequence is TTDQAVAFLK…MALQQPISAE (230 aa). The TRAM domain maps to 381 to 452; it reads HSWVSRTVDV…VYDLSGRIVG (72 aa).

Belongs to the methylthiotransferase family. RimO subfamily. It depends on [4Fe-4S] cluster as a cofactor.

The protein resides in the cytoplasm. It carries out the reaction L-aspartate(89)-[ribosomal protein uS12]-hydrogen + (sulfur carrier)-SH + AH2 + 2 S-adenosyl-L-methionine = 3-methylsulfanyl-L-aspartate(89)-[ribosomal protein uS12]-hydrogen + (sulfur carrier)-H + 5'-deoxyadenosine + L-methionine + A + S-adenosyl-L-homocysteine + 2 H(+). Catalyzes the methylthiolation of an aspartic acid residue of ribosomal protein uS12. In Parasynechococcus marenigrum (strain WH8102), this protein is Ribosomal protein uS12 methylthiotransferase RimO.